The sequence spans 196 residues: MSSKEQKTPEGQAPEEIIMDQHEEIEAVEPEASAEQVDPRDEKIANLEAQLAEAQTRERDGILRVKAEMENLRRRTELDIEKAHKFALEKFINELLPVIDSLDRALEVADKANPDMSAMVEGIELTLKSMLDVVRKFGVEVISETNVPLDPNVHQAIAMVESDDVAPGNVLGIMQKGYTLNGRTIRAAMVTVAKAK.

A disordered region spans residues 1-39 (MSSKEQKTPEGQAPEEIIMDQHEEIEAVEPEASAEQVDP).

The protein belongs to the GrpE family. As to quaternary structure, homodimer.

It localises to the cytoplasm. In terms of biological role, participates actively in the response to hyperosmotic and heat shock by preventing the aggregation of stress-denatured proteins, in association with DnaK and GrpE. It is the nucleotide exchange factor for DnaK and may function as a thermosensor. Unfolded proteins bind initially to DnaJ; upon interaction with the DnaJ-bound protein, DnaK hydrolyzes its bound ATP, resulting in the formation of a stable complex. GrpE releases ADP from DnaK; ATP binding to DnaK triggers the release of the substrate protein, thus completing the reaction cycle. Several rounds of ATP-dependent interactions between DnaJ, DnaK and GrpE are required for fully efficient folding. The chain is Protein GrpE from Escherichia coli (strain SMS-3-5 / SECEC).